A 43-amino-acid polypeptide reads, in one-letter code: Protein PsbN (43 aa).

The helical transmembrane segment at 3 to 23 threads the bilayer; it reads IATLVAIFISGLLVSFTGYAL.

This sequence belongs to the PsbN family.

It localises to the plastid. Its subcellular location is the chloroplast thylakoid membrane. May play a role in photosystem I and II biogenesis. The protein is Protein PsbN of Euonymus alatus (Burning bush).